Here is a 250-residue protein sequence, read N- to C-terminus: 3-deoxy-manno-octulosonate cytidylyltransferase (250 aa).

This sequence belongs to the KdsB family.

The protein resides in the cytoplasm. The catalysed reaction is 3-deoxy-alpha-D-manno-oct-2-ulosonate + CTP = CMP-3-deoxy-beta-D-manno-octulosonate + diphosphate. The protein operates within nucleotide-sugar biosynthesis; CMP-3-deoxy-D-manno-octulosonate biosynthesis; CMP-3-deoxy-D-manno-octulosonate from 3-deoxy-D-manno-octulosonate and CTP: step 1/1. It participates in bacterial outer membrane biogenesis; lipopolysaccharide biosynthesis. Activates KDO (a required 8-carbon sugar) for incorporation into bacterial lipopolysaccharide in Gram-negative bacteria. The sequence is that of 3-deoxy-manno-octulosonate cytidylyltransferase from Francisella philomiragia subsp. philomiragia (strain ATCC 25017 / CCUG 19701 / FSC 153 / O#319-036).